Consider the following 257-residue polypeptide: Thiazole synthase (257 aa).

Residue lysine 96 is the Schiff-base intermediate with DXP of the active site. Residues glycine 157, 184–185, and 206–207 contribute to the 1-deoxy-D-xylulose 5-phosphate site; these read AG and NT.

Belongs to the ThiG family. Homotetramer. Forms heterodimers with either ThiH or ThiS.

It localises to the cytoplasm. The enzyme catalyses [ThiS sulfur-carrier protein]-C-terminal-Gly-aminoethanethioate + 2-iminoacetate + 1-deoxy-D-xylulose 5-phosphate = [ThiS sulfur-carrier protein]-C-terminal Gly-Gly + 2-[(2R,5Z)-2-carboxy-4-methylthiazol-5(2H)-ylidene]ethyl phosphate + 2 H2O + H(+). Its pathway is cofactor biosynthesis; thiamine diphosphate biosynthesis. Catalyzes the rearrangement of 1-deoxy-D-xylulose 5-phosphate (DXP) to produce the thiazole phosphate moiety of thiamine. Sulfur is provided by the thiocarboxylate moiety of the carrier protein ThiS. In vitro, sulfur can be provided by H(2)S. This chain is Thiazole synthase, found in Bartonella henselae (strain ATCC 49882 / DSM 28221 / CCUG 30454 / Houston 1) (Rochalimaea henselae).